Here is a 195-residue protein sequence, read N- to C-terminus: Imidazoleglycerol-phosphate dehydratase (195 aa).

The protein belongs to the imidazoleglycerol-phosphate dehydratase family.

Its subcellular location is the cytoplasm. It catalyses the reaction D-erythro-1-(imidazol-4-yl)glycerol 3-phosphate = 3-(imidazol-4-yl)-2-oxopropyl phosphate + H2O. The protein operates within amino-acid biosynthesis; L-histidine biosynthesis; L-histidine from 5-phospho-alpha-D-ribose 1-diphosphate: step 6/9. This chain is Imidazoleglycerol-phosphate dehydratase, found in Geobacter metallireducens (strain ATCC 53774 / DSM 7210 / GS-15).